The chain runs to 493 residues: Calcium-binding tyrosine phosphorylation-regulated protein (493 aa).

The RIIa domain occupies 12 to 49 (YGLKTLLEGISRAVLKTNPSNINQFAAAYFQELTMYRG). Disordered regions lie at residues 85-164 (EPGK…VSPE), 244-271 (DLGS…QEPP), 330-354 (NEQS…TTSG), and 426-493 (IVSD…STAE). Over residues 90–100 (SVESKVPTQME) the composition is skewed to polar residues. The segment covering 101–117 (KSTDTDEDNVTRTEYSD) has biased composition (basic and acidic residues). Low complexity predominate over residues 141–152 (SSKPATPKTTTP). Phosphothreonine is present on threonine 151. A Phosphoserine modification is found at serine 155. 2 stretches are compositionally biased toward polar residues: residues 426–442 (IVSD…NSVP) and 461–470 (SGTSVKSSSG). A compositionally biased stretch (acidic residues) spans 484–493 (IEPEGESTAE).

In terms of assembly, interacts with FSCB. Isoform 3 self-associates. Isoform 3 and isoform 5 interact with GSK3B. Isoform 1 does not interact with GSK3B. In terms of processing, isoform 1 is phosphorylated on tyrosine residues during in vitro capacitation. Isoform 3 and isoform 5 are phosphorylated by GSK3B in vitro. Dephosphorylation affects its ability to bind calcium. Expressed in elongating spermatids and spermatozoa (at protein level). Isoform 1 is expressed in testis. Isoform 3 and isoform 5 are also expressed in brain, pancreas and numerous brain tumors.

Its subcellular location is the cytoplasm. The protein resides in the cytoskeleton. It is found in the cell projection. The protein localises to the cilium. It localises to the flagellum. Its subcellular location is the nucleus. Functionally, may function as a regulator of both motility- and head-associated functions such as capacitation and the acrosome reaction. Isoform 1 binds calcium in vitro. Isoform 2 and isoform 6 probably bind calcium. Isoform 3 and isoform 5 do not bind calcium in vitro. Isoform 4 probably does not bind calcium. The polypeptide is Calcium-binding tyrosine phosphorylation-regulated protein (CABYR) (Homo sapiens (Human)).